The primary structure comprises 135 residues: Serine protease inhibitor swm-1 (135 aa).

The first 16 residues, 1–16 (MRILVIITCIVAVATA), serve as a signal peptide directing secretion. 10 disulfides stabilise this stretch: Cys20–Cys53, Cys29–Cys48, Cys33–Cys44, Cys37–Cys73, Cys55–Cys67, Cys80–Cys114, Cys89–Cys109, Cys93–Cys105, Cys97–Cys133, and Cys116–Cys127. TIL domains follow at residues 20-73 (CEAN…VSEC) and 80-133 (CPEN…KKDC). The N-linked (GlcNAc...) asparagine glycan is linked to Asn83.

In male, expressed in the vas deferens cuboidal cells and, in posterior body wall and male-specific diagonal muscles. In hermaphrodites, expressed in posterior body wall muscles and spermatheca.

Its subcellular location is the secreted. It is found in the cytoplasmic vesicle. It localises to the secretory vesicle lumen. Its function is as follows. Serine protease inhibitor. Probably by inhibiting serine protease tyr-5 in males, prevents the maturation of spermatids into mature motile spermatozoa until their transfer into a hermaphrodite. Also required for efficient sperm transfer and thus for male fertility. The chain is Serine protease inhibitor swm-1 from Caenorhabditis elegans.